The sequence spans 576 residues: Proline--tRNA ligase (576 aa).

Belongs to the class-II aminoacyl-tRNA synthetase family. ProS type 1 subfamily. In terms of assembly, homodimer.

It localises to the cytoplasm. It catalyses the reaction tRNA(Pro) + L-proline + ATP = L-prolyl-tRNA(Pro) + AMP + diphosphate. Catalyzes the attachment of proline to tRNA(Pro) in a two-step reaction: proline is first activated by ATP to form Pro-AMP and then transferred to the acceptor end of tRNA(Pro). As ProRS can inadvertently accommodate and process non-cognate amino acids such as alanine and cysteine, to avoid such errors it has two additional distinct editing activities against alanine. One activity is designated as 'pretransfer' editing and involves the tRNA(Pro)-independent hydrolysis of activated Ala-AMP. The other activity is designated 'posttransfer' editing and involves deacylation of mischarged Ala-tRNA(Pro). The misacylated Cys-tRNA(Pro) is not edited by ProRS. The chain is Proline--tRNA ligase from Leptospira interrogans serogroup Icterohaemorrhagiae serovar copenhageni (strain Fiocruz L1-130).